Reading from the N-terminus, the 421-residue chain is Fumarylacetoacetase (421 aa).

Asp-131 is a Ca(2+) binding site. The active-site Proton acceptor is the His-138. Arg-147 is a binding site for substrate. Ca(2+)-binding residues include Glu-204, Glu-206, and Asp-238. Mg(2+) is bound at residue Asp-238. The substrate site is built by Gln-245 and Tyr-249. Mg(2+) contacts are provided by Lys-258 and Thr-262. Thr-355 contributes to the substrate binding site.

Belongs to the FAH family. It depends on Ca(2+) as a cofactor. Mg(2+) is required as a cofactor.

It catalyses the reaction 4-fumarylacetoacetate + H2O = acetoacetate + fumarate + H(+). It functions in the pathway amino-acid degradation; L-phenylalanine degradation; acetoacetate and fumarate from L-phenylalanine: step 6/6. Its function is as follows. Converts fumarylacetoacetate to acetoacetate and fumarate. Involved in tyrosine catabolic pathway. Catalyzes the final step in the tyrosine degradation pathway. The polypeptide is Fumarylacetoacetase (Arabidopsis thaliana (Mouse-ear cress)).